The primary structure comprises 137 residues: Large-conductance mechanosensitive channel (137 aa).

The next 2 membrane-spanning stretches (helical) occupy residues 10–30 (FAMRGNVVDLAVGVIIGAAFG) and 76–96 (GVFIQNVFDFVIVAFAIFVAI).

This sequence belongs to the MscL family. Homopentamer.

It localises to the cell inner membrane. In terms of biological role, channel that opens in response to stretch forces in the membrane lipid bilayer. May participate in the regulation of osmotic pressure changes within the cell. This Salmonella choleraesuis (strain SC-B67) protein is Large-conductance mechanosensitive channel.